A 459-amino-acid chain; its full sequence is E3 ubiquitin-protein ligase RNF25 (459 aa).

Residues 18-128 (SEVEVLESIY…EKGKEILTDN (111 aa)) form the RWD domain. Zn(2+) contacts are provided by C135, C138, C153, H155, H158, C161, C198, and C201. An RING-type zinc finger spans residues 135–202 (CVICLYGFQE…AVGVQCPVCR (68 aa)). Disordered stretches follow at residues 268 to 309 (PPAP…PPLP) and 322 to 459 (TRSN…KDGS). Positions 282–303 (KGSQPPSTLAAELSTSPAVQST) are enriched in polar residues. Basic and acidic residues-rich tracts occupy residues 349 to 370 (QPER…RDTQ), 378 to 389 (PLKEPMDLKPEP), 413 to 424 (RTRDCVRWERSK), and 446 to 459 (TRRE…KDGS). S450 carries the phosphoserine modification.

This sequence belongs to the RNF25 family. As to quaternary structure, interacts with UBE2D2, and may also interact with UBE2E1 and UBE2E3. Interacts with RELA/p65. Ubiquitinated; autoubiquitinated.

The protein localises to the cytoplasm. It carries out the reaction S-ubiquitinyl-[E2 ubiquitin-conjugating enzyme]-L-cysteine + [acceptor protein]-L-lysine = [E2 ubiquitin-conjugating enzyme]-L-cysteine + N(6)-ubiquitinyl-[acceptor protein]-L-lysine.. Its pathway is protein modification; protein ubiquitination. In terms of biological role, E3 ubiquitin-protein ligase that plays a key role in the RNF14-RNF25 translation quality control pathway, a pathway that takes place when a ribosome has stalled during translation, and which promotes ubiquitination and degradation of translation factors on stalled ribosomes. Catalyzes ubiquitination of RPS27A in response to ribosome collisions, promoting activation of RNF14. RNF25 catalyzes ubiquitination of other ribosomal proteins on stalled ribosomes, such as RPL0, RPL1, RPL12, RPS13 and RPS17. Also involved in ubiquitination and degradation of stalled ETF1/eRF1. Independently of its function in the response to stalled ribosomes, mediates ubiquitination and subsequent proteasomal degradation of NKD2. May also stimulate transcription mediated by NF-kappa-B via its interaction with RELA/p65. In Homo sapiens (Human), this protein is E3 ubiquitin-protein ligase RNF25.